The following is a 175-amino-acid chain: Crossover junction endodeoxyribonuclease RuvC (175 aa).

Residues D16, E76, and D148 contribute to the active site. D16, E76, and D148 together coordinate Mg(2+).

The protein belongs to the RuvC family. In terms of assembly, homodimer which binds Holliday junction (HJ) DNA. The HJ becomes 2-fold symmetrical on binding to RuvC with unstacked arms; it has a different conformation from HJ DNA in complex with RuvA. In the full resolvosome a probable DNA-RuvA(4)-RuvB(12)-RuvC(2) complex forms which resolves the HJ. It depends on Mg(2+) as a cofactor.

It localises to the cytoplasm. The catalysed reaction is Endonucleolytic cleavage at a junction such as a reciprocal single-stranded crossover between two homologous DNA duplexes (Holliday junction).. Its function is as follows. The RuvA-RuvB-RuvC complex processes Holliday junction (HJ) DNA during genetic recombination and DNA repair. Endonuclease that resolves HJ intermediates. Cleaves cruciform DNA by making single-stranded nicks across the HJ at symmetrical positions within the homologous arms, yielding a 5'-phosphate and a 3'-hydroxyl group; requires a central core of homology in the junction. The consensus cleavage sequence is 5'-(A/T)TT(C/G)-3'. Cleavage occurs on the 3'-side of the TT dinucleotide at the point of strand exchange. HJ branch migration catalyzed by RuvA-RuvB allows RuvC to scan DNA until it finds its consensus sequence, where it cleaves and resolves the cruciform DNA. The chain is Crossover junction endodeoxyribonuclease RuvC from Bradyrhizobium sp. (strain BTAi1 / ATCC BAA-1182).